The sequence spans 76 residues: UPF0352 protein PC1_1633 (76 aa).

This sequence belongs to the UPF0352 family.

The polypeptide is UPF0352 protein PC1_1633 (Pectobacterium carotovorum subsp. carotovorum (strain PC1)).